The following is a 254-amino-acid chain: Homeobox protein Dlx4b (254 aa).

A DNA-binding region (homeobox) is located at residues 129–188 (IRKPRTIYSSVQLQALHQRFQQTQYLALPERADLAAKLGLTQTQVKIWFQNKRSKYKKIM).

It belongs to the distal-less homeobox family.

The protein resides in the nucleus. In terms of biological role, during larvae development, may be important for neurocranium morphogenesis. The chain is Homeobox protein Dlx4b (dlx4b) from Danio rerio (Zebrafish).